Reading from the N-terminus, the 374-residue chain is Heme A synthase (374 aa).

The interval 1–22 (MSDHIRAASSPSRHGSEHGWQH) is disordered. Transmembrane regions (helical) follow at residues 32-52 (ILVA…VMLG), 118-138 (RLWG…LAVT), 149-169 (LILI…MVAS), 184-204 (VVHL…ALSV), and 226-246 (LGLV…HAGL). Histidine 281 serves as a coordination point for heme. The next 3 membrane-spanning stretches (helical) occupy residues 283–300 (LLAT…LIGF), 309–329 (AVLP…ATLL), and 332–352 (VAVP…TAAI). Heme is bound at residue histidine 340.

It belongs to the COX15/CtaA family. Type 2 subfamily. As to quaternary structure, interacts with CtaB. Heme b serves as cofactor.

The protein localises to the cell membrane. The enzyme catalyses Fe(II)-heme o + 2 A + H2O = Fe(II)-heme a + 2 AH2. It functions in the pathway porphyrin-containing compound metabolism; heme A biosynthesis; heme A from heme O: step 1/1. Functionally, catalyzes the conversion of heme O to heme A by two successive hydroxylations of the methyl group at C8. The first hydroxylation forms heme I, the second hydroxylation results in an unstable dihydroxymethyl group, which spontaneously dehydrates, resulting in the formyl group of heme A. The sequence is that of Heme A synthase from Granulibacter bethesdensis (strain ATCC BAA-1260 / CGDNIH1).